The following is a 104-amino-acid chain: DET1- and DDB1-associated protein 1 (104 aa).

Over residues 67 to 77 (KKNAAKKREQE) the composition is skewed to basic and acidic residues. Residues 67 to 104 (KKNAAKKREQEQAEGEGGSPAPPRKIARTDSQEMNEDS) are disordered.

The protein belongs to the DDA1 family. In terms of assembly, component of numerous DCX (DDB1-CUL4-X-box) E3 ubiquitin-protein ligase complexes which consist of a core of DDB1, cullin-4 (CUL4A or CUL4B), DDA1 and RBX1.

It participates in protein modification; protein ubiquitination. Functions as a component of numerous distinct DCX (DDB1-CUL4-X-box) E3 ubiquitin-protein ligase complexes which mediate the ubiquitination and subsequent proteasomal degradation of target proteins. In the DCX complexes, acts as a scaffolding subunit required to stabilize the complex. In Danio rerio (Zebrafish), this protein is DET1- and DDB1-associated protein 1.